The following is a 397-amino-acid chain: tRNA-specific 2-thiouridylase MnmA (397 aa).

ATP contacts are provided by residues 19-26 (AMSGGVDS) and Leu-45. Cys-113 serves as the catalytic Nucleophile. Cys-113 and Cys-210 are joined by a disulfide. Gly-137 is an ATP binding site. The interval 160–162 (RDQ) is interaction with tRNA. The active-site Cysteine persulfide intermediate is the Cys-210.

It belongs to the MnmA/TRMU family.

It is found in the cytoplasm. The enzyme catalyses S-sulfanyl-L-cysteinyl-[protein] + uridine(34) in tRNA + AH2 + ATP = 2-thiouridine(34) in tRNA + L-cysteinyl-[protein] + A + AMP + diphosphate + H(+). Its function is as follows. Catalyzes the 2-thiolation of uridine at the wobble position (U34) of tRNA, leading to the formation of s(2)U34. In Bradyrhizobium sp. (strain BTAi1 / ATCC BAA-1182), this protein is tRNA-specific 2-thiouridylase MnmA.